The following is a 101-amino-acid chain: Small ribosomal subunit protein uS14 (101 aa).

It belongs to the universal ribosomal protein uS14 family. In terms of assembly, part of the 30S ribosomal subunit. Contacts proteins S3 and S10.

Its function is as follows. Binds 16S rRNA, required for the assembly of 30S particles and may also be responsible for determining the conformation of the 16S rRNA at the A site. This chain is Small ribosomal subunit protein uS14, found in Aeromonas salmonicida (strain A449).